The chain runs to 637 residues: Neurexin-3-beta (637 aa).

Positions 1–35 (MHLRIHARRSPPRRPAWTLGIWFLFWGCIVSSVWS) are cleaved as a signal peptide. Topologically, residues 36-562 (SSNVASSSST…EVIRESSSTT (527 aa)) are extracellular. Positions 43-52 (SSTSSSPGSH) are enriched in low complexity. The segment at 43–65 (SSTSSSPGSHSQHEHHFHGSKHH) is disordered. The span at 55–65 (HEHHFHGSKHH) shows a compositional bias: basic residues. The Laminin G-like domain occupies 85–255 (ATYIFGKSGG…NPNIKINGSV (171 aa)). Ca(2+) is bound by residues D137 and I154. N184 is a glycosylation site (N-linked (GlcNAc...) asparagine). 2 residues coordinate Ca(2+): I206 and N208. N252 and N296 each carry an N-linked (GlcNAc...) asparagine glycan. Residues 289-310 (ATTTTRKNRSTASIQPTSDDLV) are disordered. Positions 298–310 (STASIQPTSDDLV) are enriched in polar residues. S312 carries an O-linked (Xyl...) (heparan sulfate) serine glycan. The helical transmembrane segment at 563 to 583 (GMVVGIVAAAALCILILLYAM) threads the bilayer. The Cytoplasmic portion of the chain corresponds to 584–637 (YKYRNRDEGSYQVDETRNYISNSAQSNGTLMKEKQQSSKSGHKKQKNKDREYYV). Residues 605–637 (NSAQSNGTLMKEKQQSSKSGHKKQKNKDREYYV) are disordered.

It belongs to the neurexin family. In terms of assembly, weakly interacts with CBLN1 and CBLN2. Very weak binding, if any, to CBLN4. Specific isoforms bind neuroligins NLGN1, NLGN2 and NLGN3. Interacts with CLSTN3. Post-translationally, processed by alpha-secretase leading to the formation of an extracellular soluble protein as well as a C-terminal membrane-embedded fragment (CTF). Proteolysis of these CTFs by gamma-secretase releases intracellular domains (ICDs) and extracellular peptides. O-glycosylated; contains heparan sulfate. Heparan sulfate attachment is required for synapse development by mediating interactions with neuroligins. In terms of tissue distribution, expressed in the blood vessel walls (at protein level).

The protein localises to the presynaptic cell membrane. Functionally, neuronal cell surface protein that may be involved in cell recognition and cell adhesion. May mediate intracellular signaling. Functions as part of a trans-synaptic complex by binding to cerebellins and postsynaptic GRID1. This interaction helps regulate the activity of NMDA and AMPA receptors at hippocampal synapses without affecting synapse formation. NRXN3B-CBLN2-GRID1 complex transduce presynaptic signals into postsynaptic AMPAR response. The sequence is that of Neurexin-3-beta from Homo sapiens (Human).